The primary structure comprises 74 residues: Defensin-like protein P322 (74 aa).

The signal sequence occupies residues 1 to 19 (MRFFATFFLLAMLVVATKM). 4 cysteine pairs are disulfide-bonded: Cys30/Cys74, Cys41/Cys61, Cys47/Cys68, and Cys51/Cys70.

This sequence belongs to the DEFL family. Protease inhibitor I18 (RTI/MTI-2) subfamily. As to expression, tuber.

It is found in the secreted. The sequence is that of Defensin-like protein P322 from Solanum tuberosum (Potato).